The sequence spans 33 residues: Gaegurin-3 (33 aa).

The cysteines at positions 27 and 33 are disulfide-linked.

It belongs to the frog skin active peptide (FSAP) family. Brevinin subfamily. As to quaternary structure, monomer. As to expression, expressed by the skin glands.

The protein localises to the secreted. In terms of biological role, has a non-hemolytic activity. Has a broad spectrum of activity against both Gram-positive and Gram-negative bacteria, fungi and protozoa. This Glandirana rugosa (Japanese wrinkled frog) protein is Gaegurin-3 (GGN3).